The chain runs to 185 residues: NADH-quinone oxidoreductase subunit B (185 aa).

[4Fe-4S] cluster-binding residues include Cys64, Cys65, Cys129, and Cys159.

This sequence belongs to the complex I 20 kDa subunit family. NDH-1 is composed of 14 different subunits. Subunits NuoB, C, D, E, F, and G constitute the peripheral sector of the complex. Requires [4Fe-4S] cluster as cofactor.

The protein resides in the cell inner membrane. It carries out the reaction a quinone + NADH + 5 H(+)(in) = a quinol + NAD(+) + 4 H(+)(out). In terms of biological role, NDH-1 shuttles electrons from NADH, via FMN and iron-sulfur (Fe-S) centers, to quinones in the respiratory chain. Couples the redox reaction to proton translocation (for every two electrons transferred, four hydrogen ions are translocated across the cytoplasmic membrane), and thus conserves the redox energy in a proton gradient. In Rhodospirillum rubrum (strain ATCC 11170 / ATH 1.1.1 / DSM 467 / LMG 4362 / NCIMB 8255 / S1), this protein is NADH-quinone oxidoreductase subunit B.